Reading from the N-terminus, the 442-residue chain is Alpha-1,6-mannosyl-glycoprotein 2-beta-N-acetylglucosaminyltransferase (442 aa).

Residues 1-9 lie on the Cytoplasmic side of the membrane; sequence MRFRIYKRK. The chain crosses the membrane as a helical; Signal-anchor for type II membrane protein span at residues 10–29; that stretch reads VLILTLVVAACGFVLWSSNG. The Lumenal portion of the chain corresponds to 30-442; sequence RQRKSDALGP…ELCKSYRRLQ (413 aa). 2 N-linked (GlcNAc...) asparagine glycosylation sites follow: N64 and N81. Residues 118 to 122 and D149 contribute to the substrate site; that span reads QVHNR. C191 and C205 are joined by a disulfide. Substrate is bound at residue 224-228; it reads QTKHH. Position 256 (D256) interacts with Mn(2+). A disulfide bond links C278 and C281. R293 is a substrate binding site. 3 disulfides stabilise this stretch: C329-C352, C334-C435, and C373-C381. H369 serves as a coordination point for Mn(2+).

Belongs to the glycosyltransferase 16 (GT16) protein family. As to quaternary structure, homodimer. The cofactor is Mn(2+). Detected in liver, lung, testis, kidney, brain, spleen, thymus, uterus and intestine.

Its subcellular location is the golgi apparatus membrane. The enzyme catalyses an N(4)-{beta-D-GlcNAc-(1-&gt;2)-alpha-D-Man-(1-&gt;3)-[alpha-D-Man-(1-&gt;6)]-beta-D-Man-(1-&gt;4)-beta-D-GlcNAc-(1-&gt;4)-beta-D-GlcNAc}-L-asparaginyl-[protein] + UDP-N-acetyl-alpha-D-glucosamine = N(4)-{beta-D-GlcNAc-(1-&gt;2)-alpha-D-Man-(1-&gt;3)-[beta-D-GlcNAc-(1-&gt;2)-alpha-D-Man-(1-&gt;6)]-beta-D-Man-(1-&gt;4)-beta-D-GlcNAc-(1-&gt;4)-beta-D-GlcNAc}-L-asparaginyl-[protein] + UDP + H(+). Its pathway is protein modification; protein glycosylation. Functionally, plays an essential role in protein N-glycosylation. Catalyzes the transfer of N-acetylglucosamine (GlcNAc) onto the free terminal mannose moiety in the core structure of the nascent N-linked glycan chain, giving rise to the second branch in complex glycans. The protein is Alpha-1,6-mannosyl-glycoprotein 2-beta-N-acetylglucosaminyltransferase (Mgat2) of Mus musculus (Mouse).